Consider the following 583-residue polypeptide: Proline--tRNA ligase (583 aa).

This sequence belongs to the class-II aminoacyl-tRNA synthetase family. ProS type 1 subfamily. In terms of assembly, homodimer.

Its subcellular location is the cytoplasm. It carries out the reaction tRNA(Pro) + L-proline + ATP = L-prolyl-tRNA(Pro) + AMP + diphosphate. Catalyzes the attachment of proline to tRNA(Pro) in a two-step reaction: proline is first activated by ATP to form Pro-AMP and then transferred to the acceptor end of tRNA(Pro). As ProRS can inadvertently accommodate and process non-cognate amino acids such as alanine and cysteine, to avoid such errors it has two additional distinct editing activities against alanine. One activity is designated as 'pretransfer' editing and involves the tRNA(Pro)-independent hydrolysis of activated Ala-AMP. The other activity is designated 'posttransfer' editing and involves deacylation of mischarged Ala-tRNA(Pro). The misacylated Cys-tRNA(Pro) is not edited by ProRS. The chain is Proline--tRNA ligase from Methylococcus capsulatus (strain ATCC 33009 / NCIMB 11132 / Bath).